The following is a 470-amino-acid chain: FRIGIDA-like protein 1 (470 aa).

Residues 336-369 (KDQNLESEFTQEKVEERVEELEKNKALRKRNTTN) adopt a coiled-coil conformation. The tract at residues 355 to 400 (ELEKNKALRKRNTTNPPKQEPQQKGKKRTRDCKNGSQVPVPSQQLL) is disordered. Polar residues predominate over residues 388 to 400 (NGSQVPVPSQQLL).

Belongs to the Frigida family. As to quaternary structure, component of the transcription activator complex FRI-C composed of FRI, FRL1, SUF4, FLX and FES1. Interacts with FRI and SUF4. As to expression, expressed during seed development and in dry seed. Preferentially expressed in the chalazal endosperm during early stages of seed development.

Required for FRI-mediated up-regulation of FLC transcripts, but not redundant with FRI and only partially redundant with FRL2. Required for the stabilization of the FRI-C complex. The protein is FRIGIDA-like protein 1 (FRL1) of Arabidopsis thaliana (Mouse-ear cress).